The chain runs to 657 residues: Probable intron-encoded endonuclease aI2 (657 aa).

The interval 1–245 is COX1 exons 1 to 2 encoded; that stretch reads MKQMSYVTRW…TYEHLFWFFG (245 aa). The next 6 helical transmembrane spans lie at 19–39, 69–89, 103–123, 152–172, 188–208, and 269–289; these read IGMT…GMSV, LLMM…NFFL, LNNI…CSVL, AMFA…NFMV, PLFA…LPVL, and MYFI…ANMV. A COX1 intron 2 encoded region spans residues 246–657; the sequence is QWWPTNYVNN…KFENKWNKKF (412 aa).

This sequence in the C-terminal section; belongs to the LAGLIDADG endonuclease family. It in the N-terminal section; belongs to the heme-copper respiratory oxidase family. In terms of processing, the mature protein may arise from proteolytic cleavage of an in-frame translation of COX1 exons 1 and 2 plus intron 2, containing the aI2 open reading frame.

It is found in the mitochondrion. The protein localises to the membrane. Functionally, mitochondrial DNA endonuclease involved in intron homing. The polypeptide is Probable intron-encoded endonuclease aI2 (aI2) (Debaryomyces hansenii (strain ATCC 36239 / CBS 767 / BCRC 21394 / JCM 1990 / NBRC 0083 / IGC 2968) (Yeast)).